The sequence spans 159 residues: SsrA-binding protein (159 aa).

It belongs to the SmpB family.

It is found in the cytoplasm. In terms of biological role, required for rescue of stalled ribosomes mediated by trans-translation. Binds to transfer-messenger RNA (tmRNA), required for stable association of tmRNA with ribosomes. tmRNA and SmpB together mimic tRNA shape, replacing the anticodon stem-loop with SmpB. tmRNA is encoded by the ssrA gene; the 2 termini fold to resemble tRNA(Ala) and it encodes a 'tag peptide', a short internal open reading frame. During trans-translation Ala-aminoacylated tmRNA acts like a tRNA, entering the A-site of stalled ribosomes, displacing the stalled mRNA. The ribosome then switches to translate the ORF on the tmRNA; the nascent peptide is terminated with the 'tag peptide' encoded by the tmRNA and targeted for degradation. The ribosome is freed to recommence translation, which seems to be the essential function of trans-translation. The polypeptide is SsrA-binding protein (Coxiella burnetii (strain RSA 331 / Henzerling II)).